The following is a 263-amino-acid chain: Oncostatin-M (263 aa).

Positions 1 to 24 (MQTRLLRTLLSLTLSLLILSMALA) are cleaved as a signal peptide. 2 cysteine pairs are disulfide-bonded: C28–C139 and C71–C177. N-linked (GlcNAc...) asparagine glycosylation is found at N30, N44, and N145. Residues 207–263 (QSPLRARRKGTRRIRVRHKGTRRIRVRRKGTRRIWVRRKGSRKIRPSRSTQSPTTRA) constitute a propeptide that is removed on maturation. Basic residues predominate over residues 241–252 (WVRRKGSRKIRP). The interval 241–263 (WVRRKGSRKIRPSRSTQSPTTRA) is disordered. The segment covering 253–263 (SRSTQSPTTRA) has biased composition (polar residues).

Belongs to the LIF/OSM family. In terms of processing, propeptide processing is not important for receptor binding activity but may be important growth-inhibitory activity.

Its subcellular location is the secreted. Growth regulator. Inhibits the proliferation of a number of tumor cell lines. It regulates cytokine production, including IL-6, G-CSF and GM-CSF from endothelial cells. Uses only type II OSM receptor (heterodimers composed of OSMR and IL6ST). Involved in the maturation of fetal hepatocytes, thereby promoting liver development and regeneration. In Mus musculus (Mouse), this protein is Oncostatin-M (Osm).